The sequence spans 515 residues: Fatty acyl-CoA reductase 1 (515 aa).

At 1 to 465 the chain is on the cytoplasmic side; sequence MVSIPEYYEG…ARKHLNKLRN (465 aa). A necessary and sufficient for PEX19-mediated localization into peroxisome membrane region spans residues 451–507; it reads SGLPAARKHLNKLRNIRYGFNTILVILIWRIFIARSQMARNIWYFVVSLCYKFLSYF. A helical transmembrane segment spans residues 466–483; it reads IRYGFNTILVILIWRIFI. Residues 484–515 are Peroxisomal-facing; sequence ARSQMARNIWYFVVSLCYKFLSYFRASSTMRY.

Belongs to the fatty acyl-CoA reductase family. Interacts with PEX19; PEX19 mediates the targeting of FAR1 to peroxisomes. As to expression, widely expressed. Expressed in all tissues examined. Highest expression seen in preputial gland. Expressed in the brain where large quantities of ether lipids are synthesized.

The protein resides in the peroxisome membrane. It catalyses the reaction a long-chain fatty acyl-CoA + 2 NADPH + 2 H(+) = a long-chain primary fatty alcohol + 2 NADP(+) + CoA. It carries out the reaction hexadecanoyl-CoA + 2 NADPH + 2 H(+) = hexadecan-1-ol + 2 NADP(+) + CoA. The catalysed reaction is octadecanoyl-CoA + 2 NADPH + 2 H(+) = octadecan-1-ol + 2 NADP(+) + CoA. The enzyme catalyses (9Z)-octadecenoyl-CoA + 2 NADPH + 2 H(+) = (9Z)-octadecen-1-ol + 2 NADP(+) + CoA. It catalyses the reaction (9Z,12Z)-octadecadienoyl-CoA + 2 NADPH + 2 H(+) = (9Z,12Z)-octadecadien-1-ol + 2 NADP(+) + CoA. It carries out the reaction eicosanoyl-CoA + 2 NADPH + 2 H(+) = eicosan-1-ol + 2 NADP(+) + CoA. The catalysed reaction is 16-methylheptadecanoyl-CoA + 2 NADPH + 2 H(+) = 16-methylheptadecan-1-ol + 2 NADP(+) + CoA. The enzyme catalyses 18-methylnonadecanoyl-CoA + 2 NADPH + 2 H(+) = 18-methylnonadecan-1-ol + 2 NADP(+) + CoA. Catalyzes the reduction of saturated and unsaturated C16 or C18 fatty acyl-CoA to fatty alcohols. It plays an essential role in the production of ether lipids/plasmalogens which synthesis requires fatty alcohols. In parallel, it is also required for wax monoesters production since fatty alcohols also constitute a substrate for their synthesis. The chain is Fatty acyl-CoA reductase 1 from Mus musculus (Mouse).